Reading from the N-terminus, the 504-residue chain is ATP synthase subunit alpha (504 aa).

ATP is bound at residue 169-176 (GDRKTGKT).

The protein belongs to the ATPase alpha/beta chains family. F-type ATPases have 2 components, CF(1) - the catalytic core - and CF(0) - the membrane proton channel. CF(1) has five subunits: alpha(3), beta(3), gamma(1), delta(1), epsilon(1). CF(0) has three main subunits: a(1), b(2) and c(9-12). The alpha and beta chains form an alternating ring which encloses part of the gamma chain. CF(1) is attached to CF(0) by a central stalk formed by the gamma and epsilon chains, while a peripheral stalk is formed by the delta and b chains.

The protein resides in the cell membrane. It catalyses the reaction ATP + H2O + 4 H(+)(in) = ADP + phosphate + 5 H(+)(out). Produces ATP from ADP in the presence of a proton gradient across the membrane. The alpha chain is a regulatory subunit. The sequence is that of ATP synthase subunit alpha from Lactiplantibacillus plantarum (strain ATCC BAA-793 / NCIMB 8826 / WCFS1) (Lactobacillus plantarum).